The following is a 766-amino-acid chain: MIWRSRAGAELFSLMALWEWIALSLHCWVLAVAAVSDQHATSPFDWLLSDKGPFHRSQEYTDFVDRSRQGFSTRYKIYREFGRWKVNNLAVERRNFLGSPLPLAPEFFRNIRLLGRRPTLQQITENLIKKYGTHFLLSATLGGEESLTIFVDKRKLSKRAEGSDSTTNSSSVTLETLHQLAASYFIDRDSTLRRLHHIQIASTAIKVTETRTGPLGCSNYDNLDSVSSVLVQSPENKIQLQGLQVLLPDYLQERFVQAALSYIACNSEGEFICKENDCWCHCGPKFPECNCPSMDIQAMEENLLRITETWKAYNSDFEESDEFKLFMKRLPMNYFLNTSTIMHLWTMDSNFQRRYEQLENSMKQLFLKAQKIVHKLFSLSKRCHKQPLISLPRQRTSTYWLTRIQSFLYCNENGLLGSFSEETHSCTCPNDQVVCTAFLPCTVGDASACLTCAPDNRTRCGTCNTGYMLSQGLCKPEVAESTDHYIGFETDLQDLEMKYLLQKTDRRIEVHAIFISNDMRLNSWFDPSWRKRMLLTLKSNKYKSSLVHMILGLSLQICLTKNSTLEPVLAVYVNPFGGSHSESWFMPVNENSFPDWERTKLDLPLQCYNWTLTLGNKWKTFFETVHIYLRSRIKSNGPNGNESIYYEPLEFIDPSRNLGYMKINNIQVFGYSMHFDPEAIRDLILQLDYPYTQGSQDSALLQLLEIRDRVNKLSPPGQRRLDLFSCLLRHRLKLSTSEVVRIQSALQAFNAKLPNTMDYDTTKLCS.

The signal sequence occupies residues 1–33; the sequence is MIWRSRAGAELFSLMALWEWIALSLHCWVLAVA. One can recognise an MACPF domain in the interval 74 to 264; the sequence is RYKIYREFGR…FVQAALSYIA (191 aa). Asn168, Asn337, Asn456, Asn562, Asn609, and Asn641 each carry an N-linked (GlcNAc...) asparagine glycan.

This sequence belongs to the BRINP family. As to expression, strongly expressed in oral keratinocytes compared to the weak expression in tongue squamous cell carcinoma (SCC). Expressed in endothelial and aortic smooth muscle cells. Overexpressed in gonadotropinomas compared to normal pituitarie tissues.

The protein localises to the secreted. The protein resides in the mitochondrion. In terms of biological role, inhibits neuronal cell proliferation by negative regulation of the cell cycle transition. Promotes pituitary gonadotrope cell proliferation, migration and invasion, when overexpressed. May play a role in cell pituitary tumor development. The protein is BMP/retinoic acid-inducible neural-specific protein 3 (BRINP3) of Homo sapiens (Human).